A 213-amino-acid polypeptide reads, in one-letter code: Pyrrolidone-carboxylate peptidase (213 aa).

Catalysis depends on residues Glu81, Cys144, and His166.

This sequence belongs to the peptidase C15 family. In terms of assembly, homodimer.

The protein resides in the cytoplasm. The catalysed reaction is Release of an N-terminal pyroglutamyl group from a polypeptide, the second amino acid generally not being Pro.. In terms of biological role, removes 5-oxoproline from various penultimate amino acid residues except L-proline. This chain is Pyrrolidone-carboxylate peptidase (pcp), found in Pseudomonas fluorescens.